The following is a 172-amino-acid chain: Translation initiation factor IF-3 (172 aa).

The protein belongs to the IF-3 family. As to quaternary structure, monomer.

Its subcellular location is the cytoplasm. In terms of biological role, IF-3 binds to the 30S ribosomal subunit and shifts the equilibrium between 70S ribosomes and their 50S and 30S subunits in favor of the free subunits, thus enhancing the availability of 30S subunits on which protein synthesis initiation begins. The polypeptide is Translation initiation factor IF-3 (Campylobacter fetus subsp. fetus (strain 82-40)).